A 178-amino-acid polypeptide reads, in one-letter code: MFDIGWSELVVIAVVALIAIGPKELPGVLRMVGQWMGKARRMAAEFQGQFNEAMREADMAELKKSFDEVRDATSGLTSGNLMTKLTDSLGEPPKLEDLDKPAANRPAADMSAASANDVPASGSIAPEAAIPKTGTEADAKALASEPLAITPEFQHATPEPAPATHETPHEAVKDAKAS.

The helical transmembrane segment at 1–21 threads the bilayer; the sequence is MFDIGWSELVVIAVVALIAIG. Residues 77-86 are compositionally biased toward polar residues; it reads TSGNLMTKLT. Residues 77-178 form a disordered region; that stretch reads TSGNLMTKLT…HEAVKDAKAS (102 aa). Basic and acidic residues predominate over residues 93 to 102; that stretch reads PKLEDLDKPA. Over residues 155 to 165 the composition is skewed to low complexity; the sequence is HATPEPAPATH. Positions 166–178 are enriched in basic and acidic residues; sequence ETPHEAVKDAKAS.

Belongs to the TatB family. The Tat system comprises two distinct complexes: a TatABC complex, containing multiple copies of TatA, TatB and TatC subunits, and a separate TatA complex, containing only TatA subunits. Substrates initially bind to the TatABC complex, which probably triggers association of the separate TatA complex to form the active translocon.

It is found in the cell inner membrane. Functionally, part of the twin-arginine translocation (Tat) system that transports large folded proteins containing a characteristic twin-arginine motif in their signal peptide across membranes. Together with TatC, TatB is part of a receptor directly interacting with Tat signal peptides. TatB may form an oligomeric binding site that transiently accommodates folded Tat precursor proteins before their translocation. This is Sec-independent protein translocase protein TatB from Nitrobacter hamburgensis (strain DSM 10229 / NCIMB 13809 / X14).